Here is a 376-residue protein sequence, read N- to C-terminus: MAQKQKCVAMLLAGGKGSRLSALTKNLAKPAVPFGGKYRIIDFTLSNCANSGIETVGILTQYQPLELHNYIGIGNAWDLDRVSGGVTVLPPYAESSGVKWYTGTASAIYQNLNYLSQYEPEYVLILSGDHIYKMDYSKMLDYHIEKEADVSISVIEVPWDEASRFGIMNTNEEMEIVEFEEKPQFPRSNLASMGIYIFNWAILKEYLEMDARNPESSNDFGKDVLPLLLDEGKKLMAYPFEGYWKDVGTVKSLWEANMDLLRDETSLNLNDRDWRIYSVNPNEPPQYIAEKAKVEESLINEGCVIEGDVKHSVLFQGVTVEEGSMVIDSVVMPGAKIGKNVVIERAIVGSEMVIEDGTIIRPEKNVDDVVLIAEGK.

Residues Y101, G166, 181-182 (EK), and S192 contribute to the alpha-D-glucose 1-phosphate site.

The protein belongs to the bacterial/plant glucose-1-phosphate adenylyltransferase family. In terms of assembly, homotetramer.

The catalysed reaction is alpha-D-glucose 1-phosphate + ATP + H(+) = ADP-alpha-D-glucose + diphosphate. Its pathway is glycan biosynthesis; glycogen biosynthesis. Involved in the biosynthesis of ADP-glucose, a building block required for the elongation reactions to produce glycogen. Catalyzes the reaction between ATP and alpha-D-glucose 1-phosphate (G1P) to produce pyrophosphate and ADP-Glc. The sequence is that of Glucose-1-phosphate adenylyltransferase from Bacillus cereus (strain ZK / E33L).